A 308-amino-acid chain; its full sequence is 3'(2'),5'-bisphosphate nucleotidase 1 (308 aa).

Position 2 is an N-acetylalanine (Ala-2). The Proton acceptor role is filled by Asp-51. Residues Glu-74, Asp-117, Leu-119, and Asp-120 each coordinate Mg(2+). The Proton acceptor role is filled by Thr-122. Thr-122 carries the post-translational modification Phosphothreonine. Residues Thr-195, His-198, Gly-220, and Lys-224 each contribute to the AMP site. Position 240 is a phosphoserine (Ser-240). Lys-244 carries the post-translational modification N6-succinyllysine. Asp-247 serves as a coordination point for Mg(2+).

It belongs to the inositol monophosphatase superfamily. The cofactor is Mg(2+). As to expression, widely expressed. Highly expressed in kidney.

It catalyses the reaction adenosine 3',5'-bisphosphate + H2O = AMP + phosphate. It carries out the reaction adenosine 2',5'-bisphosphate + H2O = AMP + phosphate. The catalysed reaction is 3'-phosphoadenylyl sulfate + H2O = adenosine 5'-phosphosulfate + phosphate. The enzyme catalyses 1D-myo-inositol 1,4-bisphosphate + H2O = 1D-myo-inositol 4-phosphate + phosphate. It catalyses the reaction 1D-myo-inositol 1,3,4-trisphosphate + H2O = 1D-myo-inositol 3,4-bisphosphate + phosphate. Its activity is regulated as follows. Uncompetitively inhibited by Li(+) (IC(50)=157 uM). PAP hydrolysis is competitively inhibited by PAPS (IC(50)=0.7 uM) and by inositol 1,4-bisphosphate (IC(50)=15 uM). Functionally, phosphatase that converts 3'(2')-phosphoadenosine 5'-phosphate (PAP) to AMP and adenosine 3'-phosphate 5'-phosphosulfate (PAPS) to adenosine 5'-phosphosulfate (APS). Is also able to hydrolyze inositol 1,4-bisphosphate (Ins(1,4)P2) and inositol 1,3,4-trisphosphate (Ins(1,3,4)P3), and is not active on Ins(1)P, Ins(4)P, Ins(3,4)P2, Ins(1,4,5)P3, Ins(1,3,4,5)P4, Ins(1,3,4,5,6)P5 or InsP6. Probably prevents the toxic accumulation of PAP, a compound which inhibits a variety of proteins, including PAPS-utilizing enzymes such as sulfotransferases, and RNA processing enzymes. Could also play a role in inositol recycling and phosphoinositide metabolism. The chain is 3'(2'),5'-bisphosphate nucleotidase 1 (Bpnt1) from Mus musculus (Mouse).